The sequence spans 904 residues: Pentatricopeptide repeat-containing protein At4g30825, chloroplastic (904 aa).

Residues 1-61 (MGSLRFSIPL…SSTRVLDKIR (61 aa)) constitute a chloroplast transit peptide. The disordered stretch occupies residues 75–94 (NSASAAPVERSRSSKLSGDQ). 20 PPR repeats span residues 173–203 (NFVA…LCGF), 209–243 (SYQV…GVRP), 244–274 (NVAT…MRKF), 278–312 (CESA…RVRL), 313–347 (KLEN…GFSP), 348–382 (NIIA…GLEP), 383–417 (DETS…GYKP), 418–452 (NSFN…GCQY), 487–521 (NQTS…DSAF), 522–553 (ESHL…MESD), 557–591 (NLHI…GVVL), 592–622 (DRIG…MDEQ), 628–662 (DVYL…GIHW), 663–697 (NQEM…GFTP), 698–732 (NTVT…GVVD), 733–766 (VISY…GFSV), 767–801 (SLEA…TSGP), 802–836 (DHYT…GLGP), 837–871 (DLCS…NIIP), and 872–904 (DKVT…QMGI).

It belongs to the PPR family. P subfamily.

The protein localises to the plastid. It is found in the chloroplast. This Arabidopsis thaliana (Mouse-ear cress) protein is Pentatricopeptide repeat-containing protein At4g30825, chloroplastic.